Consider the following 187-residue polypeptide: Small ribosomal subunit protein uS5 (187 aa).

Residues 1-20 are disordered; it reads MAERENRRDRRDDRSREETP. The 64-residue stretch at 22–85 folds into the S5 DRBM domain; it reads FADRLVAINR…EQAKRQMIRV (64 aa).

It belongs to the universal ribosomal protein uS5 family. In terms of assembly, part of the 30S ribosomal subunit. Contacts proteins S4 and S8.

With S4 and S12 plays an important role in translational accuracy. In terms of biological role, located at the back of the 30S subunit body where it stabilizes the conformation of the head with respect to the body. In Cereibacter sphaeroides (strain ATCC 17029 / ATH 2.4.9) (Rhodobacter sphaeroides), this protein is Small ribosomal subunit protein uS5.